A 530-amino-acid polypeptide reads, in one-letter code: T-complex protein 1 subunit zeta-2 (530 aa).

Belongs to the TCP-1 chaperonin family. As to quaternary structure, component of the chaperonin-containing T-complex (TRiC), a heterooligomeric complex of about 850 to 900 kDa that forms two stacked rings, 12 to 16 nm in diameter. As to expression, testis-specific.

It is found in the cytoplasm. Component of the chaperonin-containing T-complex (TRiC), a molecular chaperone complex that assists the folding of proteins upon ATP hydrolysis. In Homo sapiens (Human), this protein is T-complex protein 1 subunit zeta-2 (CCT6B).